The chain runs to 104 residues: Integration host factor subunit beta (104 aa).

Over residues 83-95 (GKEMRERLNRDSG) the composition is skewed to basic and acidic residues. Positions 83–104 (GKEMRERLNRDSGDDAPTSDTA) are disordered.

The protein belongs to the bacterial histone-like protein family. Heterodimer of an alpha and a beta chain.

In terms of biological role, this protein is one of the two subunits of integration host factor, a specific DNA-binding protein that functions in genetic recombination as well as in transcriptional and translational control. This is Integration host factor subunit beta from Rhodopseudomonas palustris (strain ATCC BAA-98 / CGA009).